A 450-amino-acid chain; its full sequence is D-inositol 3-phosphate glycosyltransferase (450 aa).

Residue H21 participates in 1D-myo-inositol 3-phosphate binding. UDP-N-acetyl-alpha-D-glucosamine is bound by residues Q27–P28 and G35. 1D-myo-inositol 3-phosphate-binding positions include D32–N37, K90, Y123, T147, and R167. Residues R241, K246, and V307 each contribute to the UDP-N-acetyl-alpha-D-glucosamine site. Residues Y316, R317, and A319 each contribute to the Mg(2+) site. The UDP-N-acetyl-alpha-D-glucosamine site is built by E329 and E337. Residue T343 coordinates Mg(2+).

Belongs to the glycosyltransferase group 1 family. MshA subfamily. As to quaternary structure, homodimer.

The catalysed reaction is 1D-myo-inositol 3-phosphate + UDP-N-acetyl-alpha-D-glucosamine = 1D-myo-inositol 2-acetamido-2-deoxy-alpha-D-glucopyranoside 3-phosphate + UDP + H(+). Functionally, catalyzes the transfer of a N-acetyl-glucosamine moiety to 1D-myo-inositol 3-phosphate to produce 1D-myo-inositol 2-acetamido-2-deoxy-glucopyranoside 3-phosphate in the mycothiol biosynthesis pathway. This is D-inositol 3-phosphate glycosyltransferase from Geodermatophilus obscurus (strain ATCC 25078 / DSM 43160 / JCM 3152 / CCUG 61914 / KCC A-0152 / KCTC 9177 / NBRC 13315 / NRRL B-3577 / G-20).